The primary structure comprises 590 residues: Leishmanolysin (590 aa).

Positions 1–39 are cleaved as a signal peptide; it reads MSVDSSSTHRHRSVAARLVRLAAAGAAVIAAVGTAAAWA. The propeptide at 40 to 87 is activation peptide; it reads HAGAVQHRCIHDAMQARVRQSVARHHTAPGAVSAVGLSYVTLGAAPTV. Disulfide bonds link cysteine 112–cysteine 129 and cysteine 178–cysteine 217. Histidine 251 provides a ligand contact to Zn(2+). Glutamate 252 is an active-site residue. Histidine 255 serves as a coordination point for Zn(2+). A glycan (N-linked (GlcNAc...) asparagine) is linked at asparagine 287. Intrachain disulfides connect cysteine 301-cysteine 373, cysteine 380-cysteine 443, cysteine 393-cysteine 412, cysteine 402-cysteine 477, cysteine 454-cysteine 498, cysteine 503-cysteine 553, and cysteine 523-cysteine 546. Histidine 321 serves as a coordination point for Zn(2+). Asparagine 565 carries the GPI-anchor amidated asparagine lipid modification. A propeptide spans 566–590 (removed in mature form); the sequence is AAAGRRGPRAAATALLVAALLAVAL.

The protein belongs to the peptidase M8 family. Zn(2+) is required as a cofactor.

The protein localises to the cell membrane. The enzyme catalyses Preference for hydrophobic residues at P1 and P1' and basic residues at P2' and P3'. A model nonapeptide is cleaved at -Ala-Tyr-|-Leu-Lys-Lys-.. Has an integral role during the infection of macrophages in the mammalian host. This is Leishmanolysin (gp63) from Leishmania donovani.